Reading from the N-terminus, the 175-residue chain is Calcineurin subunit B (175 aa).

EF-hand domains follow at residues 21–56 (AEIERLKKRFMKLDKDSSGSIDKTEFMSIPGVSANP), 58–88 (AKRIIEVFDEDNSGDVDFQEFITSLSIFSGR), 90–125 (ETDAKLRFAFRIYDIDKDGYISNGELFIVLKIMVGT), and 131–166 (QLQQIVDRTIMENDVDGDGKLSFEEFKKAAETTEVI). Asp-34, Asp-36, Ser-38, Ser-40, Glu-45, Asp-66, Asp-68, Ser-70, Asp-72, Glu-77, Asp-103, Asp-105, Asp-107, Tyr-109, Glu-114, Asp-144, Asp-146, Asp-148, Lys-150, and Glu-155 together coordinate Ca(2+).

This sequence belongs to the calcineurin regulatory subunit family. As to quaternary structure, composed of a catalytic subunit (A) and a regulatory subunit (B).

In terms of biological role, regulatory subunit of calcineurin, a calcium-dependent, calmodulin stimulated protein phosphatase. Confers calcium sensitivity. The chain is Calcineurin subunit B (CNB1) from Kluyveromyces lactis (strain ATCC 8585 / CBS 2359 / DSM 70799 / NBRC 1267 / NRRL Y-1140 / WM37) (Yeast).